Reading from the N-terminus, the 1077-residue chain is Deoxyribonuclease CdiA (1077 aa).

The FHA-2 stretch occupies residues 67–384; the sequence is IGTSRQKTTD…DRDNYDAKQS (318 aa). Residues 531 to 546 are compositionally biased toward polar residues; that stretch reads QQNVDDLSRDTGNANG. Residues 531–555 form a disordered region; sequence QQNVDDLSRDTGNANGSIGPIFDKE. A VENN CT cleavage motif motif is present at residues 781–784; that stretch reads VENN. Residues 954 to 1077 form a DNase activity region; it reads MPWEDYVGKT…GVKVTVTQVK (124 aa).

Interacts with cognate immunity protein CdiI-YPIII, which blocks its toxic DNase activity. The cofactor is Zn(2+).

It localises to the target cell. Its subcellular location is the target cell cytoplasm. Functionally, toxic component of a toxin-immunity protein module, which functions as a cellular contact-dependent growth inhibition (CDI) system. CDI modules allow bacteria to communicate with and inhibit the growth of closely related neighboring bacteria in a contact-dependent fashion. The C-terminal 123 residues (954-1077) has DNase activity in the presence of Zn(2+), converting supercoiled DNA into open-circular form. Toxic activity is neutralized by coexpression of the cognate immunity protein CdiI-YPIII, but not by non-cognate immunity proteins from other toxin-immunity modules. Expression of the DNase domain as a chimera allows bacteria to attack other non-immune bacteria which become filamentous and have lost DNA staining. Its function is as follows. The CdiA protein is thought to be exported from the cell through the central lumen of CdiB, the other half of its two-partner system (TPS). The TPS domain probably remains associated with CdiB while the FHA-1 domain forms an extended filament with the receptor-binding domain (RBD) at its extremity; in the secretion arrested state the C-terminus of the RBD and YP domains form a hairpin-like structure as the FHA-2, PT and CT domains are periplasmic. The YP domain is probably responsible for this arrest at the point where it re-enters the host cell periplasm. Upon binding to a target cell outer membrane receptor a signal is transmitted to activate secretion. The filament elongates slightly, the rest of CdiA is secreted and the FHA-2 domain becomes stably associated with the target cell's outer membrane where it facilitates entry of the toxic CT domain into the target cell periplasm. From there the toxic CT domain is cleaved and gains access to the target cell cytoplasm via an inner membrane protein. This is Deoxyribonuclease CdiA from Yersinia pseudotuberculosis serotype O:3 (strain YPIII).